The sequence spans 621 residues: CEP295 N-terminal-like protein (621 aa).

The disordered stretch occupies residues 142–253 (GGRARENEPD…RSKGADLERS (112 aa)). The segment covering 159–170 (RSARPPRAKEKH) has biased composition (basic residues). Residues 171 to 185 (RAALSEERSCREELG) are compositionally biased toward basic and acidic residues. The segment covering 203–213 (KPQTTKATGRM) has biased composition (polar residues). Basic and acidic residues predominate over residues 219-229 (PPEKRKGRPEP). Residues 328-359 (QCTLREKNKWQKELELAFEELFNINRKLKKHL) adopt a coiled-coil conformation. Disordered regions lie at residues 385 to 421 (CGAG…ASKT), 491 to 529 (DQAD…PDMS), and 543 to 586 (REQR…DRHS). Residues 498-525 (STASRQRQKAEMEQRRQKQLESLEQMEH) adopt a coiled-coil conformation. The span at 505 to 529 (QKAEMEQRRQKQLESLEQMEHPDMS) shows a compositional bias: basic and acidic residues. Polar residues predominate over residues 568 to 578 (ELSTTSPSGTS).

Its subcellular location is the cell projection. It localises to the cilium. This Homo sapiens (Human) protein is CEP295 N-terminal-like protein.